The chain runs to 290 residues: MTTHYLAFPQFDPVIFSLGPVSLHWYGLMYLVGFVFAMWLAVRRANRPGSGWPKEEVENLLYAGFLGVFLGGRIGYVLFYNLPLFLDNPLYLFKVWDGGMSFHGGLIGVIVVMLWFAHRTRRHFFQVADFVAPMVPFGLGAGRLGNFINGELWGRVTTDTPWAMLFPCSRQEDIALLPANPQWQALFERYGVLPRHPSQLYEMLLEGVVLFIILNLFIRKPRPIGSVSGLFLICYGAFRILVEFFRQPDAQLGLFSGVISMGQILSLPMILAGVIMMAWAYRRHPQQHLS.

The next 7 helical transmembrane spans lie at 21–41 (VSLH…MWLA), 60–80 (LLYA…VLFY), 98–118 (GGMS…WFAH), 124–144 (FFQV…AGRL), 198–218 (SQLY…NLFI), 224–244 (IGSV…LVEF), and 258–278 (VISM…IMMA). Residue R143 participates in a 1,2-diacyl-sn-glycero-3-phospho-(1'-sn-glycerol) binding.

It belongs to the Lgt family.

Its subcellular location is the cell inner membrane. It catalyses the reaction L-cysteinyl-[prolipoprotein] + a 1,2-diacyl-sn-glycero-3-phospho-(1'-sn-glycerol) = an S-1,2-diacyl-sn-glyceryl-L-cysteinyl-[prolipoprotein] + sn-glycerol 1-phosphate + H(+). It functions in the pathway protein modification; lipoprotein biosynthesis (diacylglyceryl transfer). Its function is as follows. Catalyzes the transfer of the diacylglyceryl group from phosphatidylglycerol to the sulfhydryl group of the N-terminal cysteine of a prolipoprotein, the first step in the formation of mature lipoproteins. The polypeptide is Phosphatidylglycerol--prolipoprotein diacylglyceryl transferase (Sodalis glossinidius (strain morsitans)).